The chain runs to 301 residues: TLR adapter interacting with SLC15A4 on the lysosome (301 aa).

Positions 290–294 match the pLxIS motif motif; that stretch reads SLHIS. The residue at position 294 (Ser294) is a Phosphoserine.

Interacts (via pLxIS motif) with IRF5; leading to IRF5 activation. Interacts with SLC15A4; leading to its recruitment to endolysosome. Post-translationally, the phosphorylated pLxIS motif constitutes an IRF5-binding motif, leading to recruitment of the transcription factor IRF5 to induce type-I interferons and other cytokines. As to expression, highly expressed in immune cell types such as B-cells, neutrophils, dendritic cells and monocytes, the expression levels are two-three-fold higher in female cells compared to male cells (at protein level). Expressed at low levels in T-cells and NK cells.

The protein resides in the lysosome membrane. It is found in the endosome membrane. Its subcellular location is the nucleus. It localises to the cytoplasm. Functionally, innate immune adapter that mediates the recruitment and activation of IRF5 downstream of endolysosomal toll-like receptors TLR7, TLR8 and TLR9. Following recruitment to endolysosome by SLC15A4 downstream of TLR7, TLR8 and TLR9, specifically recruits IRF5 transcription factor via its pLxIS motif, leading to IRF5 activation and subsequent expression of type I interferons. Plays a role in the regulation of endolysosomal pH in immune cells such as B-cells, dendritic cells and monocytes. This is TLR adapter interacting with SLC15A4 on the lysosome from Homo sapiens (Human).